We begin with the raw amino-acid sequence, 160 residues long: Putative pre-16S rRNA nuclease (160 aa).

The protein belongs to the YqgF nuclease family.

The protein resides in the cytoplasm. Functionally, could be a nuclease involved in processing of the 5'-end of pre-16S rRNA. This is Putative pre-16S rRNA nuclease from Jannaschia sp. (strain CCS1).